Consider the following 607-residue polypeptide: DNA mismatch repair protein MutL (607 aa).

The protein belongs to the DNA mismatch repair MutL/HexB family.

Its function is as follows. This protein is involved in the repair of mismatches in DNA. It is required for dam-dependent methyl-directed DNA mismatch repair. May act as a 'molecular matchmaker', a protein that promotes the formation of a stable complex between two or more DNA-binding proteins in an ATP-dependent manner without itself being part of a final effector complex. This Gemmatimonas aurantiaca (strain DSM 14586 / JCM 11422 / NBRC 100505 / T-27) protein is DNA mismatch repair protein MutL.